Here is a 292-residue protein sequence, read N- to C-terminus: GTP cyclohydrolase FolE2 (292 aa).

It belongs to the GTP cyclohydrolase IV family.

The enzyme catalyses GTP + H2O = 7,8-dihydroneopterin 3'-triphosphate + formate + H(+). It participates in cofactor biosynthesis; 7,8-dihydroneopterin triphosphate biosynthesis; 7,8-dihydroneopterin triphosphate from GTP: step 1/1. Functionally, converts GTP to 7,8-dihydroneopterin triphosphate. In Staphylococcus epidermidis (strain ATCC 12228 / FDA PCI 1200), this protein is GTP cyclohydrolase FolE2.